The chain runs to 152 residues: Plant UBX domain-containing protein 12 (152 aa).

The segment at 32 to 61 (KRFSEEESEETENTTNSSNAVFGFPNLPEE) is disordered. The 84-residue stretch at 67 to 150 (DQSVLCRICV…GLANSLVSVT (84 aa)) folds into the UBX domain.

This chain is Plant UBX domain-containing protein 12, found in Arabidopsis thaliana (Mouse-ear cress).